The sequence spans 576 residues: Sodium/hydrogen exchanger 8 (576 aa).

11 helical membrane-spanning segments follow: residues Met55–Ile75, Leu79–Ile99, Pro118–His138, Leu151–Leu171, Phe186–Ala206, Leu256–Ile276, Gly306–Met326, Val349–Pro369, Ile374–Pro394, Met412–Leu432, and Thr446–Ile466. Thr505 carries the post-translational modification Phosphothreonine. Phosphoserine occurs at positions 566 and 568.

Belongs to the monovalent cation:proton antiporter 1 (CPA1) transporter (TC 2.A.36) family. In terms of tissue distribution, predominantly expressed in the liver, skeletal muscle, kidney, and testis. Expressed in both renal cortex and medulla. Detected throughout the entire gastrointestinal tract, with high expression detected in stomach, duodenum and ascending colon. In gastric epithelium; expressed in the glands within the fundus and pylorus regions.

It localises to the golgi apparatus membrane. It is found in the golgi apparatus. The protein resides in the trans-Golgi network membrane. The protein localises to the endosome. Its subcellular location is the multivesicular body membrane. It localises to the apical cell membrane. It is found in the cytoplasmic vesicle. The protein resides in the secretory vesicle. The protein localises to the acrosome. The catalysed reaction is Na(+)(in) + H(+)(out) = Na(+)(out) + H(+)(in). Functionally, na(+)/H(+) antiporter. Mediates the electoneutral exchange of intracellular H(+) ions for extracellular Na(+) in 1:1 stoichiometry. Acts as an Na(+)/H(+) exchanger in the trans-Golgi. Contributes to the regulation of pH regulation of Golgi apparatus, and consequently, in protein trafficking and endosomal morphology. Plays a crucial role in germ cells in acrosome biogenesis and sperm development, probably by playing a role in the fusion of the Golgi-derived vesicles that form the acrosomal cap. Can also be active at the cell surface of specialized cells. In the small intestine, plays a major physiological role in transepithelial absorption of Na(+). Regulates intracellular pH homeostasis of intestinal epithelial cells. Acts as an important regulator of mucosal integrity in the intestine and in the stomach, could mediate the pH fluctuation necessary for mucin exocytosis or assist membrane trafficking of other proteins. Plays a role in photoreceptor survival and in the maintenance of intracellular pH homeostasis in retinal pigment epithelium (RPE cells). The protein is Sodium/hydrogen exchanger 8 (Slc9a8) of Mus musculus (Mouse).